We begin with the raw amino-acid sequence, 1116 residues long: ELKS/Rab6-interacting/CAST family member 1 (1116 aa).

Residues 1–54 (MYGSARSVGKVEPSSQSPGRSPRLPRSPRLGHRRTNSTGGSSGSSVGGGSGKTL) form a disordered region. K10 bears the N6-acetyllysine mark. Residues 13–28 (PSSQSPGRSPRLPRSP) are compositionally biased toward low complexity. S17, S21, and S37 each carry phosphoserine. The residue at position 38 (T38) is a Phosphothreonine. Over residues 40–51 (GSSGSSVGGGSG) the composition is skewed to gly residues. Phosphoserine occurs at positions 55, 75, and 94. The stretch at 144–988 (RQARDNTIMD…RMKLMADNYE (845 aa)) forms a coiled coil. Residues 590–602 (KEKQMSSLKERVK) are compositionally biased toward basic and acidic residues. 2 disordered regions span residues 590–609 (KEKQ…ADTT) and 814–836 (ARRR…RKKD). Residue S1005 is modified to Phosphoserine. Phosphothreonine is present on T1046. Positions 1046–1108 (TPPASYNLDD…DHCPDILEQV (63 aa)) constitute an FIP-RBD domain. Positions 1060–1100 (WENELQKMTRGQLQDELEKGERDNAELQEFANAILQQIADH) form a coiled coil.

Part of a complex with CHUK, IKBKB and IKBKG. Interacts with CHUK, IKBKB and IKBKG. The interaction with IKBKG is independent of CHUK and IKBKB. Interacts with NFKBIA. Isoform 4 interacts with PPFIA1, and through its C-terminus with the PDZ domains of RIMS1 and RIMS2. Interacts with ERC2/CAST1. Interacts with the GTB-bound forms of RAB6A isoform 1 and isoform 2 and with RAB6B. The interaction was strongest with RAB6B, followed by RAB6A isoform 2 and weakest with RAB6A isoform 1. Interacts with SDCCAG8. Part of a cortical microtubule stabilization complex (CMSC) composed of KANK1, PPFIA1, PPFIBP1, ERC1/ELKS, PHLDB2/LL5beta, CLASPs, KIF21A and possibly additional interactors; within CMSCs KANK1 and PHLDB2/LL5beta appear to be the core components for targeting of microtubule-binding proteins KIF21A and CLASPs, whereas PPFIA1, PPFIBP1 and ERC1/ELKS serve as scaffolds for protein clustering. As to expression, widely expressed. Isoform 2 and isoform 4 are abundantly expressed in brain. Isoform 1 and isoform 3 are predominantly expressed in testis and thyroid, and isoform 1 predominates in other tissues tested.

The protein localises to the cytoplasm. The protein resides in the cytoskeleton. Its subcellular location is the microtubule organizing center. It localises to the centrosome. It is found in the membrane. The protein localises to the golgi apparatus membrane. The protein resides in the presynaptic cell membrane. Its subcellular location is the cell projection. It localises to the podosome. Its function is as follows. Regulatory subunit of the IKK complex. Probably recruits IkappaBalpha/NFKBIA to the complex. May be involved in the organization of the cytomatrix at the nerve terminals active zone (CAZ) which regulates neurotransmitter release. May be involved in vesicle trafficking at the CAZ. May be involved in Rab-6 regulated endosomes to Golgi transport. In Homo sapiens (Human), this protein is ELKS/Rab6-interacting/CAST family member 1 (ERC1).